A 335-amino-acid polypeptide reads, in one-letter code: AA9 family lytic polysaccharide monooxygenase A (335 aa).

The first 21 residues, 1-21 (MSSFITKTVLAALVAAAGVRA), serve as a signal peptide directing secretion. 2 residues coordinate Cu(2+): H22 and H107. C77 and C196 form a disulfide bridge. H182 and Q191 together coordinate O2. Residue Y193 participates in Cu(2+) binding. The disordered stretch occupies residues 241 to 335 (PKMNIAGGSS…ARRHARDMMN (95 aa)). Over residues 251-303 (GAAPSTPATPTTGSGSDTPSNTAAPVESAPAESAAPVESAPAAGNGNQNNGGA) the composition is skewed to low complexity. The span at 321–335 (CKAKKARRHARDMMN) shows a compositional bias: basic residues.

It belongs to the polysaccharide monooxygenase AA9 family. Cu(2+) is required as a cofactor.

It localises to the secreted. It catalyses the reaction [(1-&gt;4)-beta-D-glucosyl]n+m + reduced acceptor + O2 = 4-dehydro-beta-D-glucosyl-[(1-&gt;4)-beta-D-glucosyl]n-1 + [(1-&gt;4)-beta-D-glucosyl]m + acceptor + H2O.. In terms of biological role, lytic polysaccharide monooxygenase (LPMO) that depolymerizes crystalline and amorphous polysaccharides via the oxidation of scissile alpha- or beta-(1-4)-glycosidic bonds, yielding C1 or C4 oxidation products. Catalysis by LPMOs requires the reduction of the active-site copper from Cu(II) to Cu(I) by a reducing agent and H(2)O(2) or O(2) as a cosubstrate. Is capable of cleaving cellulose, but not chitin. Is also active on tamarind xyloglucan and longer xyloglucan oligosaccharides. Has no activity toward shorter cellooligosaccharides (Glc3-6), as well as toward the xyloglucan-heptamer, birchwood xylan, wheat arabinoxylan, konjac glucomannan, ivory nut mannan, beta-glucan from barley, lichenan from Icelandic moss, starch, and spruce galactoglucomannan. Has unprecedented broad specificity on xyloglucan, cleaving any glycosidicbond in theb-glucan main chain, regardless of xylosyl substitutions. When incubated with a mixture of xyloglucan and cellulose, efficiently attacks the xyloglucan, whereas cellulose conversion is inhibited, suggesting that removal of hemicellulose may be the true function of this LPMO during biomass conversion. This is AA9 family lytic polysaccharide monooxygenase A from Gibberella zeae (strain ATCC MYA-4620 / CBS 123657 / FGSC 9075 / NRRL 31084 / PH-1) (Wheat head blight fungus).